A 185-amino-acid polypeptide reads, in one-letter code: Ribosome-recycling factor (185 aa).

This sequence belongs to the RRF family.

It is found in the cytoplasm. Its function is as follows. Responsible for the release of ribosomes from messenger RNA at the termination of protein biosynthesis. May increase the efficiency of translation by recycling ribosomes from one round of translation to another. This chain is Ribosome-recycling factor, found in Bacillus mycoides (strain KBAB4) (Bacillus weihenstephanensis).